The chain runs to 303 residues: Oxygen-dependent coproporphyrinogen-III oxidase (303 aa).

Position 93 (Ser93) interacts with substrate. A divalent metal cation is bound by residues His97 and His107. The active-site Proton donor is the His107. Position 109–111 (109–111 (NIR)) interacts with substrate. A divalent metal cation contacts are provided by His146 and His176. The segment at 241 to 276 (YVEFNLLLDRGTLFGIQSNGRIESILSSMPPLVKWE) is important for dimerization.

Belongs to the aerobic coproporphyrinogen-III oxidase family. Homodimer. The cofactor is a divalent metal cation.

The protein resides in the cytoplasm. The catalysed reaction is coproporphyrinogen III + O2 + 2 H(+) = protoporphyrinogen IX + 2 CO2 + 2 H2O. It functions in the pathway porphyrin-containing compound metabolism; protoporphyrin-IX biosynthesis; protoporphyrinogen-IX from coproporphyrinogen-III (O2 route): step 1/1. Involved in the heme biosynthesis. Catalyzes the aerobic oxidative decarboxylation of propionate groups of rings A and B of coproporphyrinogen-III to yield the vinyl groups in protoporphyrinogen-IX. This is Oxygen-dependent coproporphyrinogen-III oxidase from Wigglesworthia glossinidia brevipalpis.